The following is a 500-amino-acid chain: MFPLAYPLLFVLLGALSWWILPIISPLKRHHKLPPGPRGLPIIGSLHTLGALPHRTLQTLAKKYGPIMSMRLGSVPTIVVSSPQAAELFLKTHDNIFASRPKLQAAEYMSYGTMGMSFTAYGPHWRNIRKFVVLELLTPAKINSFVGMRREELGTVVKSIKEASAANEVVDLSAKVANIIENMTYRLLLGRTKDDRYDLKGIMNEALTLAGRFNIADFVPFLGPLDIQGLTRQFKDTGKRLDKILEFIIDEHEQNSSNGNASGDFIDDMLSLKNKPSNTHDELSKVIDRSVIKAIMIDIISAAIDTSDTSIEWILTELIKHPRAMKKCQEEIDAVVGVDRMVEETDLPNLEYVYMVVKEGLRLHPVAPLLGPHESMEDITINGYFIPKQSRVIVNSWALGRDPNVWSENAEEFLPERFEGSNVDVRGRDFQLLPFGSGRRGCPGMQLGLITVQLVVARLVHCFDWNLPNGTTPDNLDMTEKFGLTTPRVKHLLAVPKYRL.

Residues 4-24 (LAYPLLFVLLGALSWWILPII) traverse the membrane as a helical segment. Cysteine 442 is a heme binding site.

The protein belongs to the cytochrome P450 family. Requires heme as cofactor.

It localises to the membrane. In terms of biological role, probable heme-thiolate monooxygenase. The sequence is that of Cytochrome P450 CYP736A12 from Panax ginseng (Korean ginseng).